The chain runs to 119 residues: Large ribosomal subunit protein bL20 (119 aa).

Belongs to the bacterial ribosomal protein bL20 family.

Its function is as follows. Binds directly to 23S ribosomal RNA and is necessary for the in vitro assembly process of the 50S ribosomal subunit. It is not involved in the protein synthesizing functions of that subunit. In Clostridium perfringens (strain ATCC 13124 / DSM 756 / JCM 1290 / NCIMB 6125 / NCTC 8237 / Type A), this protein is Large ribosomal subunit protein bL20.